The chain runs to 78 residues: Ubiquitin-like protein 1 (78 aa).

It belongs to the ubiquitin family.

This chain is Ubiquitin-like protein 1 (ubl1), found in Schizosaccharomyces pombe (strain 972 / ATCC 24843) (Fission yeast).